The sequence spans 358 residues: WD repeat domain phosphoinositide-interacting protein 4 (358 aa).

2 WD repeats span residues 2–40 (AQQR…EKGH) and 188–228 (AHQS…KLVE). Positions 229–232 (LRRG) match the L/FRRG motif motif. A WD 3 repeat occupies 233–272 (TDPATLYCINFSHDSSFLCASSDKGTVHIFALKDTKLNRR).

The protein belongs to the WD repeat PROPPIN family.

It is found in the preautophagosomal structure. In terms of biological role, component of the autophagy machinery that controls the major intracellular degradation process by which cytoplasmic materials are packaged into autophagosomes and delivered to lysosomes for degradation. Binds phosphatidylinositol 3-phosphate (PtdIns3P). The chain is WD repeat domain phosphoinositide-interacting protein 4 (wdr45) from Danio rerio (Zebrafish).